A 293-amino-acid polypeptide reads, in one-letter code: Acetylglutamate kinase (293 aa).

Substrate is bound by residues 68–69, Arg-90, and Asn-189; that span reads GG.

Belongs to the acetylglutamate kinase family. ArgB subfamily.

The protein resides in the cytoplasm. The catalysed reaction is N-acetyl-L-glutamate + ATP = N-acetyl-L-glutamyl 5-phosphate + ADP. Its pathway is amino-acid biosynthesis; L-arginine biosynthesis; N(2)-acetyl-L-ornithine from L-glutamate: step 2/4. Its function is as follows. Catalyzes the ATP-dependent phosphorylation of N-acetyl-L-glutamate. The chain is Acetylglutamate kinase from Caldicellulosiruptor bescii (strain ATCC BAA-1888 / DSM 6725 / KCTC 15123 / Z-1320) (Anaerocellum thermophilum).